The chain runs to 79 residues: Anti-insect Ac4 (79 aa).

Residues 1–17 (MISLSLLLMIGVESVRD) form the signal peptide. The LCN-type CS-alpha/beta domain occupies 18–77 (GYIVDFKNCVYRCVPPCDGLCKKNGGKGGSCSFLIGSGLACWCNALPDNVPIKDPLHKCP). 4 disulfide bridges follow: C26–C76, C30–C48, C34–C58, and C38–C60.

It belongs to the long (4 C-C) scorpion toxin superfamily. Sodium channel inhibitor family. Alpha subfamily. As to expression, expressed by the venom gland.

It is found in the secreted. In terms of biological role, alpha toxins bind voltage-independently at site-3 of sodium channels (Nav) and inhibit the inactivation of the activated channels, thereby blocking neuronal transmission. This protein is weakly toxic against insects (ED(50)&gt;2 ug per 100 mg of blowfly larvae), but is inactive against mammalian sodium channels (rNav1.2a, and rNav1.4). The polypeptide is Anti-insect Ac4 (Androctonus crassicauda (Arabian fat-tailed scorpion)).